Here is an 88-residue protein sequence, read N- to C-terminus: Small ribosomal subunit protein uS17 (88 aa).

It belongs to the universal ribosomal protein uS17 family. In terms of assembly, part of the 30S ribosomal subunit.

In terms of biological role, one of the primary rRNA binding proteins, it binds specifically to the 5'-end of 16S ribosomal RNA. The protein is Small ribosomal subunit protein uS17 of Lactobacillus gasseri (strain ATCC 33323 / DSM 20243 / BCRC 14619 / CIP 102991 / JCM 1131 / KCTC 3163 / NCIMB 11718 / NCTC 13722 / AM63).